The sequence spans 193 residues: 3-isopropylmalate dehydratase small subunit (193 aa).

It belongs to the LeuD family. LeuD type 1 subfamily. Heterodimer of LeuC and LeuD.

It carries out the reaction (2R,3S)-3-isopropylmalate = (2S)-2-isopropylmalate. Its pathway is amino-acid biosynthesis; L-leucine biosynthesis; L-leucine from 3-methyl-2-oxobutanoate: step 2/4. In terms of biological role, catalyzes the isomerization between 2-isopropylmalate and 3-isopropylmalate, via the formation of 2-isopropylmaleate. The polypeptide is 3-isopropylmalate dehydratase small subunit (Listeria innocua serovar 6a (strain ATCC BAA-680 / CLIP 11262)).